A 159-amino-acid polypeptide reads, in one-letter code: Protein-export protein SecB (159 aa).

This sequence belongs to the SecB family. As to quaternary structure, homotetramer, a dimer of dimers. One homotetramer interacts with 1 SecA dimer.

Its subcellular location is the cytoplasm. Functionally, one of the proteins required for the normal export of preproteins out of the cell cytoplasm. It is a molecular chaperone that binds to a subset of precursor proteins, maintaining them in a translocation-competent state. It also specifically binds to its receptor SecA. This is Protein-export protein SecB from Shewanella amazonensis (strain ATCC BAA-1098 / SB2B).